A 368-amino-acid chain; its full sequence is tRNA-specific 2-thiouridylase MnmA (368 aa).

ATP contacts are provided by residues 11 to 18 (GMSGGVDS) and Met37. Residues 97–99 (NPD) are interaction with target base in tRNA. Cys102 (nucleophile) is an active-site residue. Cys102 and Cys199 are disulfide-bonded. Gly127 lines the ATP pocket. The segment at 149–151 (KDQ) is interaction with tRNA. Cys199 (cysteine persulfide intermediate) is an active-site residue. The interval 311-312 (RY) is interaction with tRNA.

Belongs to the MnmA/TRMU family. Interacts with TusE.

Its subcellular location is the cytoplasm. The catalysed reaction is S-sulfanyl-L-cysteinyl-[protein] + uridine(34) in tRNA + AH2 + ATP = 2-thiouridine(34) in tRNA + L-cysteinyl-[protein] + A + AMP + diphosphate + H(+). Functionally, catalyzes the 2-thiolation of uridine at the wobble position (U34) of tRNA(Lys), tRNA(Glu) and tRNA(Gln), leading to the formation of s(2)U34, the first step of tRNA-mnm(5)s(2)U34 synthesis. Sulfur is provided by IscS, via a sulfur-relay system. Binds ATP and its substrate tRNAs. The polypeptide is tRNA-specific 2-thiouridylase MnmA (Klebsiella pneumoniae subsp. pneumoniae (strain ATCC 700721 / MGH 78578)).